Consider the following 241-residue polypeptide: Orotidine 5'-phosphate decarboxylase (241 aa).

Substrate contacts are provided by residues Asp-16, Lys-37, 64-73 (DLKFHDIPTT), Thr-128, Arg-190, Gln-199, Gly-219, and Arg-220. Lys-66 (proton donor) is an active-site residue.

This sequence belongs to the OMP decarboxylase family. Type 1 subfamily. Homodimer.

The enzyme catalyses orotidine 5'-phosphate + H(+) = UMP + CO2. The protein operates within pyrimidine metabolism; UMP biosynthesis via de novo pathway; UMP from orotate: step 2/2. Catalyzes the decarboxylation of orotidine 5'-monophosphate (OMP) to uridine 5'-monophosphate (UMP). The protein is Orotidine 5'-phosphate decarboxylase of Prochlorococcus marinus (strain NATL2A).